Reading from the N-terminus, the 149-residue chain is Aspartate 1-decarboxylase (149 aa).

The active-site Schiff-base intermediate with substrate; via pyruvic acid is the Ser-25. A Pyruvic acid (Ser) modification is found at Ser-25. Substrate is bound at residue Thr-57. Tyr-58 serves as the catalytic Proton donor. Substrate is bound at residue 73 to 75 (GAA). Residues 119 to 149 (GDPAAALPGDPSSLRGDVLDPAGARGLGGGA) form a disordered region.

It belongs to the PanD family. In terms of assembly, heterooctamer of four alpha and four beta subunits. Pyruvate serves as cofactor. Is synthesized initially as an inactive proenzyme, which is activated by self-cleavage at a specific serine bond to produce a beta-subunit with a hydroxyl group at its C-terminus and an alpha-subunit with a pyruvoyl group at its N-terminus.

The protein localises to the cytoplasm. It catalyses the reaction L-aspartate + H(+) = beta-alanine + CO2. Its pathway is cofactor biosynthesis; (R)-pantothenate biosynthesis; beta-alanine from L-aspartate: step 1/1. Catalyzes the pyruvoyl-dependent decarboxylation of aspartate to produce beta-alanine. This Parafrankia sp. (strain EAN1pec) protein is Aspartate 1-decarboxylase.